The sequence spans 307 residues: Porphobilinogen deaminase (307 aa).

Cys-241 is modified (S-(dipyrrolylmethanemethyl)cysteine).

This sequence belongs to the HMBS family. As to quaternary structure, monomer. It depends on dipyrromethane as a cofactor.

It carries out the reaction 4 porphobilinogen + H2O = hydroxymethylbilane + 4 NH4(+). It functions in the pathway porphyrin-containing compound metabolism; protoporphyrin-IX biosynthesis; coproporphyrinogen-III from 5-aminolevulinate: step 2/4. In terms of biological role, tetrapolymerization of the monopyrrole PBG into the hydroxymethylbilane pre-uroporphyrinogen in several discrete steps. The protein is Porphobilinogen deaminase of Macrococcus caseolyticus (strain JCSC5402) (Macrococcoides caseolyticum).